The chain runs to 685 residues: DNA ligase (685 aa).

NAD(+)-binding positions include 48–52, 97–98, and E131; these read DAEYD and SL. Catalysis depends on K133, which acts as the N6-AMP-lysine intermediate. R154, E190, K304, and K328 together coordinate NAD(+). 4 residues coordinate Zn(2+): C422, C425, C440, and C445. Residues 603–685 form the BRCT domain; sequence PEEGPLSGRR…RLLSGEERPG (83 aa).

Belongs to the NAD-dependent DNA ligase family. LigA subfamily. The cofactor is Mg(2+). Mn(2+) is required as a cofactor.

It carries out the reaction NAD(+) + (deoxyribonucleotide)n-3'-hydroxyl + 5'-phospho-(deoxyribonucleotide)m = (deoxyribonucleotide)n+m + AMP + beta-nicotinamide D-nucleotide.. Its function is as follows. DNA ligase that catalyzes the formation of phosphodiester linkages between 5'-phosphoryl and 3'-hydroxyl groups in double-stranded DNA using NAD as a coenzyme and as the energy source for the reaction. It is essential for DNA replication and repair of damaged DNA. This chain is DNA ligase, found in Rubrobacter xylanophilus (strain DSM 9941 / JCM 11954 / NBRC 16129 / PRD-1).